The primary structure comprises 362 residues: 3-dehydroquinate synthase (362 aa).

NAD(+)-binding positions include 71-76 (DGEQYK), 105-109 (GVVGD), 129-130 (TT), lysine 142, lysine 151, and 169-172 (CLKT). Glutamate 184, histidine 247, and histidine 264 together coordinate Zn(2+).

This sequence belongs to the sugar phosphate cyclases superfamily. Dehydroquinate synthase family. It depends on Co(2+) as a cofactor. Zn(2+) serves as cofactor. Requires NAD(+) as cofactor.

Its subcellular location is the cytoplasm. The enzyme catalyses 7-phospho-2-dehydro-3-deoxy-D-arabino-heptonate = 3-dehydroquinate + phosphate. The protein operates within metabolic intermediate biosynthesis; chorismate biosynthesis; chorismate from D-erythrose 4-phosphate and phosphoenolpyruvate: step 2/7. In terms of biological role, catalyzes the conversion of 3-deoxy-D-arabino-heptulosonate 7-phosphate (DAHP) to dehydroquinate (DHQ). This Escherichia coli O127:H6 (strain E2348/69 / EPEC) protein is 3-dehydroquinate synthase.